A 369-amino-acid chain; its full sequence is NAD-dependent epimerase/dehydratase FUM13 (369 aa).

NADP(+) is bound at residue Tyr176.

Belongs to the NAD(P)-dependent epimerase/dehydratase family. Dihydroflavonol-4-reductase subfamily.

The protein operates within mycotoxin biosynthesis. Its function is as follows. NAD-dependent epimerase/dehydratase; part of the gene cluster that mediates the biosynthesis of fumonisins B1 (FB1), B2 (FB2), B3 (FB3), and B4 (FB4), which are carcinogenic mycotoxins. Within the pathway, FUM13 stereospecifically reduces the intermediate 3-keto intermediate 2-amino-3-oxo-12,16-dimethylicosane to the 3-hydroxyl product 2-amino-3-hydroxy-12,16-dimethylicosane. The biosynthesis starts with the FUM1-catalyzed carbon chain assembly from one molecule of acetyl-CoA, eight molecules of malonyl-CoA, and two molecules of methionine (in S-adenosyl form). The C18 polyketide chain is released from the enzyme by a nucleophilic attack of a carbanion, which is derived from R-carbon of alanine by decarboxylation, on the carbonyl carbon of polyketide acyl chain. This step is catalyzed by the pyridoxal 5'-phosphate-dependent aminoacyl transferase FUM8. The resultant 3-keto intermediate is then stereospecifically reduced to a 3-hydroxyl product by reductase FUM13. Subsequent oxidations at C-10 by the cytochrome P450 monooxygenase FUM2, C-14 and C-15 by FUM6, FUM12 or FUM15, tricarballylic esterification of the hydroxyl groups on C-14 and C-15 by acyltransferase FUM14, and C-5 hydroxylation by 2-keto-glutarate-dependent dioxygenase FUM3 furnish the biosynthesis of fumonisins. The tricarballylic moieties are most likely derived from the citric acid cycle, and their addition to the carbon backbone may involve FUM7, FUM10, FUM11 and FUM14. The protein is NAD-dependent epimerase/dehydratase FUM13 of Gibberella moniliformis (strain M3125 / FGSC 7600) (Maize ear and stalk rot fungus).